Reading from the N-terminus, the 318-residue chain is MDRTSSRCKVAIIGSGNIGTDLMIKVLRHGRHLEMGAMVGIDPASDGLARAKRLGVATTAQGVEGLLALPEFKDIGIAFDATSAGAHARHNELLQAHGVKVIDLTPAAIGPYVVPAINLDAELDAPNINMVTCGGQATIPMVAAVSRVAQVHYAEIVASIASKSAGPGTRANIDEFTETTSKAIEVIGGARKGKAIIVLNPAEPPLIMRDSVFVLSEVVDRDAIAASVKEMVASVQRYVPGYRLKQEVQFELIEKPANVPGVGLVSGLKTSIFLEVEGAAHYLPAYAGNLDIMTSAALSCAERLAERGKVRTLPSALV.

NAD(+) is bound at residue 15–18 (SGNI). The active-site Acyl-thioester intermediate is the C133. NAD(+)-binding positions include 164 to 172 (SAGPGTRAN) and N289.

Belongs to the acetaldehyde dehydrogenase family.

The enzyme catalyses acetaldehyde + NAD(+) + CoA = acetyl-CoA + NADH + H(+). In Azotobacter vinelandii (strain DJ / ATCC BAA-1303), this protein is Acetaldehyde dehydrogenase 1 (xylQ).